The sequence spans 274 residues: Non-homologous end joining protein Ku (274 aa).

The 185-residue stretch at 11–195 (ITFGLVNVPV…KYKITPKELS (185 aa)) folds into the Ku domain.

It belongs to the prokaryotic Ku family. As to quaternary structure, homodimer. Interacts with LigD.

With LigD forms a non-homologous end joining (NHEJ) DNA repair enzyme, which repairs dsDNA breaks with reduced fidelity. Binds linear dsDNA with 5'- and 3'- overhangs but not closed circular dsDNA nor ssDNA. Recruits and stimulates the ligase activity of LigD. The chain is Non-homologous end joining protein Ku from Coxiella burnetii (strain RSA 331 / Henzerling II).